Here is a 184-residue protein sequence, read N- to C-terminus: UPF0179 protein Pcal_2106 (184 aa).

The segment covering glycine 146–leucine 161 has biased composition (low complexity). Residues glycine 146–proline 184 are disordered.

Belongs to the UPF0179 family.

The polypeptide is UPF0179 protein Pcal_2106 (Pyrobaculum calidifontis (strain DSM 21063 / JCM 11548 / VA1)).